Here is a 466-residue protein sequence, read N- to C-terminus: Histidine--tRNA ligase (466 aa).

This sequence belongs to the class-II aminoacyl-tRNA synthetase family. In terms of assembly, homodimer.

It localises to the cytoplasm. It carries out the reaction tRNA(His) + L-histidine + ATP = L-histidyl-tRNA(His) + AMP + diphosphate + H(+). The polypeptide is Histidine--tRNA ligase (Bifidobacterium longum subsp. infantis (strain ATCC 15697 / DSM 20088 / JCM 1222 / NCTC 11817 / S12)).